A 129-amino-acid chain; its full sequence is uncharacterized protein (129 aa).

In terms of domain architecture, VOC spans 6 to 129 (QVHHIAIIAT…DGLPLELYEQ (124 aa)). A divalent metal cation contacts are provided by His-9, Glu-57, His-78, and Glu-125.

The protein to B.subtilis YwkD.

This is an uncharacterized protein from Escherichia coli (strain K12).